We begin with the raw amino-acid sequence, 201 residues long: Small ribosomal subunit protein uS4 (201 aa).

Residues 20–46 (SGTGKELSRRPYAPGQHGQDRRGSLSE) are disordered. The S4 RNA-binding domain maps to 93 to 156 (RRLDNVVYRL…KDLQIVKEAL (64 aa)).

It belongs to the universal ribosomal protein uS4 family. As to quaternary structure, part of the 30S ribosomal subunit. Contacts protein S5. The interaction surface between S4 and S5 is involved in control of translational fidelity.

Functionally, one of the primary rRNA binding proteins, it binds directly to 16S rRNA where it nucleates assembly of the body of the 30S subunit. With S5 and S12 plays an important role in translational accuracy. This chain is Small ribosomal subunit protein uS4, found in Ligilactobacillus salivarius (strain UCC118) (Lactobacillus salivarius).